Consider the following 146-residue polypeptide: Ribonuclease P protein component (146 aa).

The protein belongs to the RnpA family. Consists of a catalytic RNA component (M1 or rnpB) and a protein subunit.

It catalyses the reaction Endonucleolytic cleavage of RNA, removing 5'-extranucleotides from tRNA precursor.. RNaseP catalyzes the removal of the 5'-leader sequence from pre-tRNA to produce the mature 5'-terminus. It can also cleave other RNA substrates such as 4.5S RNA. The protein component plays an auxiliary but essential role in vivo by binding to the 5'-leader sequence and broadening the substrate specificity of the ribozyme. The sequence is that of Ribonuclease P protein component from Helicobacter hepaticus (strain ATCC 51449 / 3B1).